A 324-amino-acid chain; its full sequence is Olfactory receptor 5T17 (324 aa).

Residues Met1–Ile37 are Extracellular-facing. Residue Asn17 is glycosylated (N-linked (GlcNAc...) asparagine). A helical transmembrane segment spans residues Phe38–Val58. Topologically, residues Val59–Arg66 are cytoplasmic. Residues Leu67–Ser87 form a helical membrane-spanning segment. Topologically, residues Val88 to Thr111 are extracellular. N-linked (GlcNAc...) asparagine glycosylation occurs at Asn101. A disulfide bond links Cys109 and Cys201. A helical membrane pass occupies residues Gln112 to Tyr132. The Cytoplasmic portion of the chain corresponds to Asp133–Ala145. A helical transmembrane segment spans residues Val146–Leu166. The Extracellular segment spans residues His167–Gln208. A helical transmembrane segment spans residues Leu209–Ser229. Residues Tyr230–Ile249 lie on the Cytoplasmic side of the membrane. The chain crosses the membrane as a helical span at residues Phe250–Met270. At Tyr271–Asp283 the chain is on the extracellular side. N-linked (GlcNAc...) asparagine glycosylation is present at Asn277. A helical membrane pass occupies residues Met284–Leu304. The Cytoplasmic portion of the chain corresponds to Arg305–Glu324.

It belongs to the G-protein coupled receptor 1 family.

Its subcellular location is the cell membrane. In terms of biological role, potential odorant receptor. The chain is Olfactory receptor 5T17 from Mus musculus (Mouse).